Here is a 590-residue protein sequence, read N- to C-terminus: Multidrug resistance ABC transporter ATP-binding and permease protein (590 aa).

6 helical membrane passes run 35 to 55 (YLFF…QLQV), 79 to 99 (IALY…LGIF), 150 to 170 (IPQA…MLQM), 176 to 196 (LAMI…MTFG), 261 to 281 (VMML…IYLI), and 292 to 312 (LGMM…ATFF). The ABC transmembrane type-1 domain occupies 38-317 (FVIGIVAGII…VATFFTELAK (280 aa)). Residues 349 to 584 (LSAHHVDFAY…HPLYAKYVSE (236 aa)) form the ABC transporter domain. ATP is bound at residue 382-389 (GPSGGGKS).

The protein belongs to the ABC transporter superfamily. Multidrug exporter LmrA (TC 3.A.1.117.1) family. In terms of assembly, homodimer.

Its subcellular location is the cell membrane. It carries out the reaction ATP + H2O + xenobioticSide 1 = ADP + phosphate + xenobioticSide 2.. Functionally, efflux transporter for a variety of amphiphilic cationic compounds, including antibiotics. This Lactococcus lactis subsp. cremoris (strain MG1363) protein is Multidrug resistance ABC transporter ATP-binding and permease protein (lmrA).